The following is a 60-amino-acid chain: Mastoparan-VT3 (60 aa).

Residues 1 to 27 (MKNTILILFTAFIALLGFFGMSAEALA) form the signal peptide. AXPX repeat units follow at residues 27–30 (ADPK), 31–34 (ADPL), 35–38 (AGPN), and 41–44 (ADPE). Positions 28–45 (DPKADPLAGPNPDADPEA) are excised as a propeptide. L59 bears the Leucine amide mark.

Belongs to the MCD family. Mastoparan subfamily. Expressed by the venom gland.

It is found in the secreted. Its function is as follows. The synthetic peptide shows antimicrobial activities against Gram-negative bacteria (but not against all strains tested), Gram-positive bacteria (all strains tested) and the fungi C.albicans and C.parapsilosis. Exhibits moderate hemolytic activity (25% at 100 ug/ml) against washed human erythrocytes. This is Mastoparan-VT3 from Vespa tropica (Greater banded hornet).